The following is a 275-amino-acid chain: Large ribosomal subunit protein uL2 (275 aa).

Disordered regions lie at residues 1–24 (MGIR…FSEI) and 208–275 (AGRT…RRRR). Residues 12–22 (GTRQATVSDFS) show a composition bias toward polar residues. 2 stretches are compositionally biased toward basic residues: residues 208–219 (AGRTRHLGRRPQ) and 255–275 (LGKK…RRRR).

Belongs to the universal ribosomal protein uL2 family. Part of the 50S ribosomal subunit. Forms a bridge to the 30S subunit in the 70S ribosome.

Its function is as follows. One of the primary rRNA binding proteins. Required for association of the 30S and 50S subunits to form the 70S ribosome, for tRNA binding and peptide bond formation. It has been suggested to have peptidyltransferase activity; this is somewhat controversial. Makes several contacts with the 16S rRNA in the 70S ribosome. The polypeptide is Large ribosomal subunit protein uL2 (Picosynechococcus sp. (strain ATCC 27264 / PCC 7002 / PR-6) (Agmenellum quadruplicatum)).